Reading from the N-terminus, the 63-residue chain is Large ribosomal subunit protein uL30 (63 aa).

This sequence belongs to the universal ribosomal protein uL30 family. As to quaternary structure, part of the 50S ribosomal subunit.

The sequence is that of Large ribosomal subunit protein uL30 from Bradyrhizobium sp. (strain ORS 278).